The chain runs to 806 residues: Xylosyltransferase sqv-6 (806 aa).

The Cytoplasmic segment spans residues 1–11; that stretch reads MLFNGTTKYRD. The helical; Signal-anchor for type II membrane protein transmembrane segment at 12–32 threads the bilayer; sequence YAIVISLFFLLNVYLLYNTAQ. The Lumenal portion of the chain corresponds to 33-806; sequence HTQVGNSKHI…GYDEDTQTLI (774 aa). Cys-57 and Cys-85 are joined by a disulfide. N-linked (GlcNAc...) asparagine glycans are attached at residues Asn-89 and Asn-169. 3 cysteine pairs are disulfide-bonded: Cys-101/Cys-445, Cys-464/Cys-478, and Cys-466/Cys-476. Residues 109 to 205 enclose the WSC domain; the sequence is IDQRIGCFLD…FNAVEIFRTG (97 aa). UDP-alpha-D-xylose contacts are provided by residues Asp-264 and 293 to 295; that span reads TIW. N-linked (GlcNAc...) asparagine glycosylation is present at Asn-325. UDP-alpha-D-xylose is bound at residue 398-399; sequence DW. Residues Ser-479 and 505 to 506 each bind UDP-alpha-D-xylose; that span reads RK. Asn-614, Asn-655, and Asn-719 each carry an N-linked (GlcNAc...) asparagine glycan. A disulfide bridge connects residues Cys-772 and Cys-778.

Belongs to the glycosyltransferase 14 family. XylT subfamily. Requires a divalent metal cation as cofactor.

It is found in the endoplasmic reticulum membrane. It localises to the golgi apparatus membrane. It catalyses the reaction UDP-alpha-D-xylose + L-seryl-[protein] = 3-O-(beta-D-xylosyl)-L-seryl-[protein] + UDP + H(+). Its pathway is glycan metabolism; chondroitin sulfate biosynthesis. It participates in glycan metabolism; heparan sulfate biosynthesis. Its function is as follows. Catalyzes the first step in biosynthesis of glycosaminoglycan. Transfers D-xylose from UDP-D-xylose to specific serine residues of the core protein. Required for vulval morphogenesis and zygotic cytokinesis, suggesting that glycosaminoglycans play a central role in vulval morphogenesis. The polypeptide is Xylosyltransferase sqv-6 (Caenorhabditis elegans).